Here is a 327-residue protein sequence, read N- to C-terminus: Undecaprenyl-phosphate 4-deoxy-4-formamido-L-arabinose transferase (327 aa).

The Cytoplasmic segment spans residues 1–235 (MFDAAPIKKV…TCLTTTPLRL (235 aa)). The helical transmembrane segment at 236–256 (LSLLGSVIAIGGFSLSVLLIV) threads the bilayer. Topologically, residues 257-269 (LRLALGPQWAAEG) are periplasmic. Residues 270–290 (VFMLFAVLFTFIGAQFIGMGL) form a helical membrane-spanning segment. Topologically, residues 291-327 (LGEYIGRIYNDVRARPRYFVQQVIYPESTPFTEESHQ) are cytoplasmic.

Belongs to the glycosyltransferase 2 family.

Its subcellular location is the cell inner membrane. It catalyses the reaction UDP-4-deoxy-4-formamido-beta-L-arabinose + di-trans,octa-cis-undecaprenyl phosphate = 4-deoxy-4-formamido-alpha-L-arabinopyranosyl di-trans,octa-cis-undecaprenyl phosphate + UDP. Its pathway is glycolipid biosynthesis; 4-amino-4-deoxy-alpha-L-arabinose undecaprenyl phosphate biosynthesis; 4-amino-4-deoxy-alpha-L-arabinose undecaprenyl phosphate from UDP-4-deoxy-4-formamido-beta-L-arabinose and undecaprenyl phosphate: step 1/2. It participates in bacterial outer membrane biogenesis; lipopolysaccharide biosynthesis. Its function is as follows. Catalyzes the transfer of 4-deoxy-4-formamido-L-arabinose from UDP to undecaprenyl phosphate. The modified arabinose is attached to lipid A and is required for resistance to polymyxin and cationic antimicrobial peptides. This Salmonella choleraesuis (strain SC-B67) protein is Undecaprenyl-phosphate 4-deoxy-4-formamido-L-arabinose transferase.